The following is a 181-amino-acid chain: Adenine phosphoribosyltransferase (181 aa).

It belongs to the purine/pyrimidine phosphoribosyltransferase family. As to quaternary structure, homodimer.

It localises to the cytoplasm. It catalyses the reaction AMP + diphosphate = 5-phospho-alpha-D-ribose 1-diphosphate + adenine. It functions in the pathway purine metabolism; AMP biosynthesis via salvage pathway; AMP from adenine: step 1/1. Its function is as follows. Catalyzes a salvage reaction resulting in the formation of AMP, that is energically less costly than de novo synthesis. The protein is Adenine phosphoribosyltransferase of Chelativorans sp. (strain BNC1).